Reading from the N-terminus, the 227-residue chain is Thiocyanate methyltransferase 1 (227 aa).

4 residues coordinate S-adenosyl-L-methionine: tryptophan 36, tryptophan 40, tryptophan 47, and glycine 74. At serine 86 the chain carries Phosphoserine. S-adenosyl-L-methionine-binding positions include aspartate 95, aspartate 123–valine 124, and tyrosine 139.

It belongs to the class I-like SAM-binding methyltransferase superfamily. TPMT family. As to expression, expressed in shoots, leaves, stems, inflorescences, flowers and green siliques.

It carries out the reaction thiocyanate + S-adenosyl-L-methionine = methyl thiocyanate + S-adenosyl-L-homocysteine. Its function is as follows. S-adenosyl-L-methionine-dependent methyltransferase. Involved in glucosinolate metabolism and defense against phytopathogens. Highly reactive to thiocyanate (NCS(-)) derived from myrosinase-mediated hydrolysis of glucosinolates upon tissue damage. In Arabidopsis thaliana (Mouse-ear cress), this protein is Thiocyanate methyltransferase 1.